Reading from the N-terminus, the 141-residue chain is Large ribosomal subunit protein uL11 (141 aa).

The protein belongs to the universal ribosomal protein uL11 family. In terms of assembly, part of the ribosomal stalk of the 50S ribosomal subunit. Interacts with L10 and the large rRNA to form the base of the stalk. L10 forms an elongated spine to which L12 dimers bind in a sequential fashion forming a multimeric L10(L12)X complex. In terms of processing, one or more lysine residues are methylated.

Functionally, forms part of the ribosomal stalk which helps the ribosome interact with GTP-bound translation factors. This is Large ribosomal subunit protein uL11 from Acaryochloris marina (strain MBIC 11017).